We begin with the raw amino-acid sequence, 48 residues long: Cuticle protein 10 (48 aa).

In Limulus polyphemus (Atlantic horseshoe crab), this protein is Cuticle protein 10.